The primary structure comprises 241 residues: Carboxy-S-adenosyl-L-methionine synthase (241 aa).

S-adenosyl-L-methionine contacts are provided by residues Tyr-38, 63–65, 88–89, 116–117, Asn-131, and Arg-198; these read GCS, DN, and DI.

It belongs to the class I-like SAM-binding methyltransferase superfamily. Cx-SAM synthase family. Homodimer.

The enzyme catalyses prephenate + S-adenosyl-L-methionine = carboxy-S-adenosyl-L-methionine + 3-phenylpyruvate + H2O. Its function is as follows. Catalyzes the conversion of S-adenosyl-L-methionine (SAM) to carboxy-S-adenosyl-L-methionine (Cx-SAM). This is Carboxy-S-adenosyl-L-methionine synthase from Actinobacillus pleuropneumoniae serotype 5b (strain L20).